The primary structure comprises 327 residues: Phenylalanine--tRNA ligase alpha subunit (327 aa).

Glu252 contacts Mg(2+).

This sequence belongs to the class-II aminoacyl-tRNA synthetase family. Phe-tRNA synthetase alpha subunit type 1 subfamily. As to quaternary structure, tetramer of two alpha and two beta subunits. It depends on Mg(2+) as a cofactor.

The protein localises to the cytoplasm. The enzyme catalyses tRNA(Phe) + L-phenylalanine + ATP = L-phenylalanyl-tRNA(Phe) + AMP + diphosphate + H(+). In Shewanella putrefaciens (strain CN-32 / ATCC BAA-453), this protein is Phenylalanine--tRNA ligase alpha subunit.